The chain runs to 187 residues: MAPGSHLVLAASEDCSSTHCVSQVGAKSLGVYAVNYPASNDFASSDFPKTVIDGIRDAGSHIQSMAMSCPQTRQVLGGYSQGAAVAGYVTSAVVPPAVPVQAVPAPMAPEVANHVAAVTLFGAPSAQFLGQYGAPPIAIGPLYQPKTLQLCADGDSICGDGNSPVAHGLYAVNGMVGQGANFAASRL.

Cys15 and Cys69 are oxidised to a cystine. The Nucleophile role is filled by Ser80. A disulfide bond links Cys151 and Cys158. Asp155 is an active-site residue. Residue His167 is the Proton donor/acceptor of the active site.

The protein belongs to the cutinase family.

It is found in the cytoplasm. It localises to the cell membrane. Its subcellular location is the secreted. The protein resides in the cell wall. In terms of biological role, may have a role in cell wall processes. Does not exhibit cutinase activity. This Mycobacterium tuberculosis (strain ATCC 25618 / H37Rv) protein is Probable carboxylesterase Culp7.